The sequence spans 580 residues: Cytochrome c oxidase subunit 1 (580 aa).

The tract at residues 1–25 (MTAVAPRVDGHVAPQRPEPTGHARK) is disordered. The helical transmembrane segment at 43–63 (IMYIIMSFSFFFLGGLMALLI) threads the bilayer. His87 contacts Fe(II)-heme a. The next 6 membrane-spanning stretches (helical) occupy residues 90-110 (VMLL…VLPL), 122-142 (LNAF…AGFL), 171-191 (MWII…INML), 214-234 (IFVT…AALG), 259-279 (LFWF…FGII), and 292-312 (FGYI…MAVW). 2 residues coordinate Cu cation: His265 and Tyr269. The segment at residues 265-269 (HPEVY) is a cross-link (1'-histidyl-3'-tyrosine (His-Tyr)). The Cu cation site is built by His314 and His315. The next 2 helical transmembrane spans lie at 316-336 (MFVT…LISV) and 360-380 (MIWA…GIML). A heme a3-binding site is contributed by His398. 3 helical membrane-spanning segments follow: residues 399–419 (FHYT…YFWF), 434–454 (IHFW…HWLG), and 477–497 (ISTI…WNVF). His400 lines the Fe(II)-heme a pocket.

This sequence belongs to the heme-copper respiratory oxidase family. Associates with subunits II, III and IV to form cytochrome c oxidase. It depends on Cu(2+) as a cofactor. Heme is required as a cofactor.

The protein resides in the cell membrane. The enzyme catalyses 4 Fe(II)-[cytochrome c] + O2 + 8 H(+)(in) = 4 Fe(III)-[cytochrome c] + 2 H2O + 4 H(+)(out). The protein operates within energy metabolism; oxidative phosphorylation. In terms of biological role, cytochrome c oxidase is the component of the respiratory chain that catalyzes the reduction of oxygen to water. Subunits 1-3 form the functional core of the enzyme complex. CO I is the catalytic subunit of the enzyme. Electrons originating in cytochrome c are transferred via the copper A center of subunit 2 and heme A of subunit 1 to the bimetallic center formed by heme A3 and copper B. The chain is Cytochrome c oxidase subunit 1 (ctaD) from Corynebacterium efficiens (strain DSM 44549 / YS-314 / AJ 12310 / JCM 11189 / NBRC 100395).